A 341-amino-acid polypeptide reads, in one-letter code: Heterogeneous nuclear ribonucleoproteins A2/B1 (341 aa).

2 consecutive RRM domains span residues 9 to 92 (RKLF…ESGK) and 100 to 179 (KKLF…LSRQ). A Glycyl lysine isopeptide (Lys-Gly) (interchain with G-Cter in SUMO2) cross-link involves residue lysine 10. At serine 17 the chain carries Phosphoserine. The residue at position 26 (arginine 26) is an Omega-N-methylarginine. Serine 73 carries the post-translational modification Phosphoserine. An N6,N6-dimethyllysine; alternate modification is found at lysine 92. Lysine 92 participates in a covalent cross-link: Glycyl lysine isopeptide (Lys-Gly) (interchain with G-Cter in SUMO2); alternate. Glycyl lysine isopeptide (Lys-Gly) (interchain with G-Cter in SUMO2) cross-links involve residues lysine 100, lysine 108, and lysine 125. Residue threonine 128 is modified to Phosphothreonine. Serine 137 is modified (phosphoserine). A Glycyl lysine isopeptide (Lys-Gly) (interchain with G-Cter in SUMO2) cross-link involves residue lysine 140. Threonine 147 carries the post-translational modification Phosphothreonine. Glycyl lysine isopeptide (Lys-Gly) (interchain with G-Cter in SUMO2); alternate cross-links involve residues lysine 156 and lysine 161. Lysine 156 and lysine 161 each carry N6-acetyllysine; alternate. The residue at position 164 (threonine 164) is a Phosphothreonine. A Glycyl lysine isopeptide (Lys-Gly) (interchain with G-Cter in SUMO2) cross-link involves residue lysine 174. Phosphoserine occurs at positions 177 and 189. The disordered stretch occupies residues 181 to 341 (MQEVQSSRSG…SGGYGGRSRY (161 aa)). The segment covering 190-211 (GRGGNFGFGDSRGGGGNFGPGP) has biased composition (gly residues). Asymmetric dimethylarginine; alternate is present on arginine 191. Residue arginine 191 is modified to Dimethylated arginine; alternate. At arginine 191 the chain carries Omega-N-methylarginine; alternate. A Phosphoserine modification is found at serine 200. Asymmetric dimethylarginine; alternate is present on arginine 201. Arginine 201 bears the Dimethylated arginine; alternate mark. Arginine 201 is modified (omega-N-methylarginine; alternate). Phosphoserine is present on serine 213. The residue at position 216 (arginine 216) is an Omega-N-methylarginine. Serine 219 and serine 224 each carry phosphoserine. Arginine 226 bears the Omega-N-methylarginine mark. At serine 247 the chain carries Phosphoserine. Arginine 254 carries the asymmetric dimethylarginine; alternate modification. At arginine 254 the chain carries Omega-N-methylarginine; alternate. The tract at residues 296–335 (QQPSNYGPMKSGNFGGSRNMGGPYGGGNYGPGGSGGSGGY) is nuclear targeting sequence. Over residues 308–341 (NFGGSRNMGGPYGGGNYGPGGSGGSGGYGGRSRY) the composition is skewed to gly residues. The residue at position 312 (serine 312) is a Phosphoserine. Position 313 is an omega-N-methylarginine (arginine 313). Phosphotyrosine is present on tyrosine 319. Residues serine 329 and serine 332 each carry the phosphoserine modification. The residue at position 335 (tyrosine 335) is a Phosphotyrosine. Omega-N-methylarginine is present on arginine 338.

In terms of assembly, identified in the spliceosome C complex. Identified in a IGF2BP1-dependent mRNP granule complex containing untranslated mRNAs. Interacts with IGF2BP1. Interacts with C9orf72. Interacts with DGCR8. Interacts with TARDBP. Interacts with CKAP5. Interacts with PPIA/CYPA. Interacts (via C-terminus) with FAM76B; the interaction results in retention of HNRNPA2B1 in the nucleus and inhibition of the NF-kappa-B-mediated inflammatory pathway. Interacts with NF-kappa-B inhibitors NFKBIA and NFKBIE; the interaction may be mediated by the RRM2 domain of HNRNPA2B1, and HNRNPA2B1 may interact simultaneously with FAM76B and either NFKBIA or NFKBIE to form a complex. In terms of processing, sumoylated in exosomes, promoting miRNAs-binding. Post-translationally, asymmetric dimethylation at Arg-254 constitutes the major methylation site. According to a report, methylation affects subcellular location and promotes nuclear localization. According to another report, methylation at Arg-254 does not influence nucleocytoplasmic shuttling.

Its subcellular location is the nucleus. It localises to the nucleoplasm. The protein localises to the cytoplasmic granule. It is found in the secreted. The protein resides in the extracellular exosome. Heterogeneous nuclear ribonucleoprotein (hnRNP) that associates with nascent pre-mRNAs, packaging them into hnRNP particles. The hnRNP particle arrangement on nascent hnRNA is non-random and sequence-dependent and serves to condense and stabilize the transcripts and minimize tangling and knotting. Packaging plays a role in various processes such as transcription, pre-mRNA processing, RNA nuclear export, subcellular location, mRNA translation and stability of mature mRNAs. Forms hnRNP particles with at least 20 other different hnRNP and heterogeneous nuclear RNA in the nucleus. Involved in transport of specific mRNAs to the cytoplasm in oligodendrocytes and neurons: acts by specifically recognizing and binding the A2RE (21 nucleotide hnRNP A2 response element) or the A2RE11 (derivative 11 nucleotide oligonucleotide) sequence motifs present on some mRNAs, and promotes their transport to the cytoplasm. Specifically binds single-stranded telomeric DNA sequences, protecting telomeric DNA repeat against endonuclease digestion. Also binds other RNA molecules, such as primary miRNA (pri-miRNAs): acts as a nuclear 'reader' of the N6-methyladenosine (m6A) mark by specifically recognizing and binding a subset of nuclear m6A-containing pri-miRNAs. Binding to m6A-containing pri-miRNAs promotes pri-miRNA processing by enhancing binding of DGCR8 to pri-miRNA transcripts. Involved in miRNA sorting into exosomes following sumoylation, possibly by binding (m6A)-containing pre-miRNAs. Acts as a regulator of efficiency of mRNA splicing, possibly by binding to m6A-containing pre-mRNAs. Plays a role in the splicing of pyruvate kinase PKM by binding repressively to sequences flanking PKM exon 9, inhibiting exon 9 inclusion and resulting in exon 10 inclusion and production of the PKM M2 isoform. This chain is Heterogeneous nuclear ribonucleoproteins A2/B1 (HNRNPA2B1), found in Saguinus oedipus (Cotton-top tamarin).